Reading from the N-terminus, the 248-residue chain is 4-hydroxy-tetrahydrodipicolinate reductase (248 aa).

Residue 13–18 (GITGRL) participates in NAD(+) binding. R36 provides a ligand contact to NADP(+). NAD(+) contacts are provided by residues 84–86 (GTT) and 108–111 (AANF). H140 (proton donor/acceptor) is an active-site residue. H141 is a (S)-2,3,4,5-tetrahydrodipicolinate binding site. The Proton donor role is filled by K144. 150–151 (GT) contributes to the (S)-2,3,4,5-tetrahydrodipicolinate binding site.

It belongs to the DapB family.

It localises to the cytoplasm. The catalysed reaction is (S)-2,3,4,5-tetrahydrodipicolinate + NAD(+) + H2O = (2S,4S)-4-hydroxy-2,3,4,5-tetrahydrodipicolinate + NADH + H(+). It carries out the reaction (S)-2,3,4,5-tetrahydrodipicolinate + NADP(+) + H2O = (2S,4S)-4-hydroxy-2,3,4,5-tetrahydrodipicolinate + NADPH + H(+). It participates in amino-acid biosynthesis; L-lysine biosynthesis via DAP pathway; (S)-tetrahydrodipicolinate from L-aspartate: step 4/4. Functionally, catalyzes the conversion of 4-hydroxy-tetrahydrodipicolinate (HTPA) to tetrahydrodipicolinate. In Gluconobacter oxydans (strain 621H) (Gluconobacter suboxydans), this protein is 4-hydroxy-tetrahydrodipicolinate reductase.